The chain runs to 186 residues: Interferon beta-2 (186 aa).

An N-terminal signal peptide occupies residues 1 to 21 (MTHRCLLQMVLLLCFSTTALS). Residues Cys-52 and Cys-161 are joined by a disulfide bond. N-linked (GlcNAc...) asparagine glycosylation is found at Asn-131 and Asn-173.

This sequence belongs to the alpha/beta interferon family. Monomer.

The protein localises to the secreted. Its function is as follows. Has antiviral, antibacterial and anticancer activities. This Bos taurus (Bovine) protein is Interferon beta-2 (IFNB2).